The following is a 128-amino-acid chain: Kinase-associated lipoprotein B (128 aa).

A signal peptide spans 1 to 25 (MSTFETGSIVKGFYKTGVYIGEITA). Cysteine 26 carries the N-palmitoyl cysteine lipid modification. A lipid anchor (S-diacylglycerol cysteine) is attached at cysteine 26.

The protein localises to the cell membrane. Functionally, may play a role in the activation or the expression of KinB. The chain is Kinase-associated lipoprotein B (kapB) from Bacillus subtilis (strain 168).